The primary structure comprises 220 residues: GILT-like protein CBG03282 (220 aa).

The signal sequence occupies residues M1–S22. N131 carries N-linked (GlcNAc...) asparagine glycosylation.

Belongs to the GILT family.

It localises to the secreted. In Caenorhabditis briggsae, this protein is GILT-like protein CBG03282.